A 338-amino-acid chain; its full sequence is Aspartate-semialdehyde dehydrogenase (338 aa).

NADP(+) is bound by residues 13–16 and 41–42; these read TGNV and NS. Residue arginine 101 participates in phosphate binding. The active-site Acyl-thioester intermediate is the cysteine 132. A substrate-binding site is contributed by glutamine 159. NADP(+) is bound by residues 162 to 163 and proline 187; that span reads SG. Position 216 (lysine 216) interacts with phosphate. Residue arginine 237 coordinates substrate. Histidine 244 serves as the catalytic Proton acceptor. Asparagine 317 is a binding site for NADP(+).

Belongs to the aspartate-semialdehyde dehydrogenase family. Homodimer.

The enzyme catalyses L-aspartate 4-semialdehyde + phosphate + NADP(+) = 4-phospho-L-aspartate + NADPH + H(+). It functions in the pathway amino-acid biosynthesis; L-lysine biosynthesis via DAP pathway; (S)-tetrahydrodipicolinate from L-aspartate: step 2/4. Its pathway is amino-acid biosynthesis; L-methionine biosynthesis via de novo pathway; L-homoserine from L-aspartate: step 2/3. The protein operates within amino-acid biosynthesis; L-threonine biosynthesis; L-threonine from L-aspartate: step 2/5. In terms of biological role, catalyzes the NADPH-dependent formation of L-aspartate-semialdehyde (L-ASA) by the reductive dephosphorylation of L-aspartyl-4-phosphate. This chain is Aspartate-semialdehyde dehydrogenase, found in Rickettsia typhi (strain ATCC VR-144 / Wilmington).